We begin with the raw amino-acid sequence, 351 residues long: MPSETLWEIAKAEVEKRRSHGSEGDGAEIGEKSVFFIGSKNGGKTTIILRCLDRDESAKPTLALEYTYGRKTKGHNTPKDIAHFWELGGGTSLLDLISIPITVDTLRTFSIVLVLDLSKPNDLWSTMENLLQATKSHVDKVIMKLGKTSSKASAEMRQRMWSVVQKDHPDRELIDPFPIPLVIIGSKYDIFQDFDPEKRKVICKTLRFVAHYYGASLMFTSKSEALLLKIRGVINQLAFGIDKSKSICVDQNKPLFITAGLDSLCQIGSPPVPDSDIGKLQAHSPMELWKKVYDKLFPPKSTGTLKAVQDPARDPQYAESEVDEMRVQKDQELEHYKRSSSKTWKQIELDS.

The disordered stretch occupies residues 303 to 335 (GTLKAVQDPARDPQYAESEVDEMRVQKDQELEH). The span at 323–335 (DEMRVQKDQELEH) shows a compositional bias: basic and acidic residues.

Belongs to the dynein light intermediate chain family. As to quaternary structure, light intermediate chain of the cytoplasmic dynein complex 2, a multisubunit complex composed at least of eleven different proteins. The cytoplasmic dynein 2 complex consists of two catalytic heavy chains (HCs) and a number of non-catalytic subunits presented by intermediate chains (ICs), light intermediate chains (LICs) and light chains (LCs). Among them, a heavy chain (DYNC2H1), two intermediate chains (DYNC2I2 and DYNC2I1), a light intermediate chain (DYNC2LI1), and a light chain (DYNLT2B) are unique to the dynein-2 complex, but a subset of light chains are also shared by dynein-1 and dynein-2 complexes. Dynein-2 complex is built around two copies of cytoplasmic dynein 2 heavy chain 1 (DYNC2H1). The C-terminal region forms the motor domain, which converts the energy from ATP hydrolysis into movement. Its N-terminal region forms the tail, an extended structure that binds the other subunits and holds the two heavy chains in a homodimer. Interacts with DYNC2H1 (via N-terminus); this interaction stabilizes the dynein-2 complex structure. In terms of tissue distribution, specifically expressed by ciliated cells in brain, lung, spleen, testis and kidney (at protein level). Enriched in the ependymal layer lining the lateral ventricles (at protein level).

It is found in the cytoplasm. Its subcellular location is the cell projection. It localises to the cilium. The protein localises to the cytoskeleton. The protein resides in the cilium basal body. It is found in the cilium axoneme. Its subcellular location is the microtubule organizing center. It localises to the centrosome. Its function is as follows. Acts as one of several non-catalytic accessory components of the cytoplasmic dynein 2 complex (dynein-2 complex), a motor protein complex that drives the movement of cargos along microtubules within cilia and flagella in concert with the intraflagellar transport (IFT) system, facilitating the assembly of these organelles. Involved in the regulation of ciliary length. The sequence is that of Cytoplasmic dynein 2 light intermediate chain 1 (Dync2li1) from Mus musculus (Mouse).